We begin with the raw amino-acid sequence, 949 residues long: Coiled-coil domain-containing protein 80 (949 aa).

Positions 1–27 are cleaved as a signal peptide; the sequence is MTWKMGPHFTMLLAMWLVCGSASQSSA. 3 disordered regions span residues 24 to 79, 289 to 360, and 408 to 609; these read QSSA…RRKS, HVVQ…ATRA, and GPSV…SPRK. Residues 295 to 305 are compositionally biased toward gly residues; that stretch reads NNGGGGGGSTG. Over residues 308-328 the composition is skewed to basic and acidic residues; sequence SDKRKEDPRRTQIHPTREPPR. Positions 345 to 360 are enriched in low complexity; sequence RATTLPPAPVTTATRA. Basic and acidic residues predominate over residues 419 to 429; it reads PRKEQQREKPQ. Over residues 436 to 453 the composition is skewed to polar residues; the sequence is KATNYGSFTATPPTTLWE. Positions 463-477 are enriched in basic and acidic residues; that stretch reads RFRDNRTDKREHGHQ. N467 is a glycosylation site (N-linked (GlcNAc...) asparagine). Residues 487–498 are compositionally biased toward basic residues; the sequence is KPIKGKLPKKKE. Basic and acidic residues-rich tracts occupy residues 499 to 511, 534 to 548, and 556 to 581; these read KILSNEYEAKYDL, KESKKHEKPEKPEKE, and AKPDKLLRSEKQMKKAEKKSKQEKEK. Glycyl lysine isopeptide (Lys-Gly) (interchain with G-Cter in SUMO2) cross-links involve residues K544 and K547. Positions 559–587 form a coiled coil; it reads DKLLRSEKQMKKAEKKSKQEKEKTKKKKA.

This sequence belongs to the CCDC80 family. As to quaternary structure, binds to various extracellular matrix proteins. Post-translationally, phosphorylated. As to expression, isoform 2 is expressed in uterus, liver, lung, spleen, kidney, heart, bladder, skeletal muscle and brain (at protein level). Isoform 2 is expressed very low in mammary gland and intestine (at protein level). Isoform 2 is expressed in lactating mammary glands and mammary tumors (at protein level). Ubiquitous (isoform 1). Isoform 2 is expressed in ovary, uterus, mammary glands, liver, lung, spleen, kidney, heart, bladder, intestine, skeletal muscle and brain.

The protein localises to the secreted. It localises to the extracellular space. Its subcellular location is the extracellular matrix. Promotes cell adhesion and matrix assembly. In Rattus norvegicus (Rat), this protein is Coiled-coil domain-containing protein 80 (Ccdc80).